The following is a 106-amino-acid chain: ATP-dependent Clp protease adapter protein ClpS (106 aa).

The protein belongs to the ClpS family. As to quaternary structure, binds to the N-terminal domain of the chaperone ClpA.

In terms of biological role, involved in the modulation of the specificity of the ClpAP-mediated ATP-dependent protein degradation. This chain is ATP-dependent Clp protease adapter protein ClpS, found in Escherichia coli O139:H28 (strain E24377A / ETEC).